The sequence spans 338 residues: Nucleoid-associated protein PA14_59050 (338 aa).

It belongs to the YejK family.

The protein resides in the cytoplasm. It is found in the nucleoid. This Pseudomonas aeruginosa (strain UCBPP-PA14) protein is Nucleoid-associated protein PA14_59050.